The following is a 157-amino-acid chain: Small ribosomal subunit protein bS6 (157 aa).

Residues 96-151 (HEEGPSAMMRKADRDRDRDERGGGGFRGDREGGFRGDREGGGFRGDRGPRRPRDDA) show a composition bias toward basic and acidic residues. The segment at 96–157 (HEEGPSAMMR…RDDAPAATEE (62 aa)) is disordered.

This sequence belongs to the bacterial ribosomal protein bS6 family.

Functionally, binds together with bS18 to 16S ribosomal RNA. In Rhodopseudomonas palustris (strain BisA53), this protein is Small ribosomal subunit protein bS6.